The primary structure comprises 1358 residues: Probable aldehyde oxidase 1 (1358 aa).

In terms of domain architecture, 2Fe-2S ferredoxin-type spans 4–91 (AAAVVAVNGE…HCAVTTSEGI (88 aa)). Cys43, Cys48, Cys51, and Cys73 together coordinate [2Fe-2S] cluster. The FAD-binding PCMH-type domain occupies 236 to 418 (AVTGDGCWFH…ISISIPDWCS (183 aa)). The interval 540–567 (KPENANNVPNGSCTTNGTTNGSAESTVD) is disordered. Over residues 549 to 561 (NGSCTTNGTTNGS) the composition is skewed to low complexity.

This sequence belongs to the xanthine dehydrogenase family. As to quaternary structure, aldehyde oxidases (AO) are homodimers and heterodimers of AO subunits. Requires [2Fe-2S] cluster as cofactor. FAD serves as cofactor. It depends on Mo-molybdopterin as a cofactor.

The enzyme catalyses an aldehyde + O2 + H2O = a carboxylate + H2O2 + H(+). The chain is Probable aldehyde oxidase 1 from Oryza sativa subsp. japonica (Rice).